Consider the following 97-residue polypeptide: Protein 9b (97 aa).

Residues 8–97 form the 9b domain; that stretch reads VPPALHLVDP…PDEFVVVTAK (90 aa).

In terms of assembly, homodimer.

The protein resides in the host cytoplasmic vesicle membrane. Its subcellular location is the host cytoplasm. This chain is Protein 9b, found in Bat coronavirus 279/2005 (BtCoV).